Reading from the N-terminus, the 425-residue chain is UPF0597 protein VSAL_I0741 (425 aa).

The protein belongs to the UPF0597 family.

The protein is UPF0597 protein VSAL_I0741 of Aliivibrio salmonicida (strain LFI1238) (Vibrio salmonicida (strain LFI1238)).